The chain runs to 118 residues: Small ribosomal subunit protein bS6 (118 aa).

Positions 98–118 are disordered; it reads TAAPAAKVAPVETAPAAEAAE. Positions 99–118 are enriched in low complexity; it reads AAPAAKVAPVETAPAAEAAE.

It belongs to the bacterial ribosomal protein bS6 family.

Functionally, binds together with bS18 to 16S ribosomal RNA. In Geobacter metallireducens (strain ATCC 53774 / DSM 7210 / GS-15), this protein is Small ribosomal subunit protein bS6.